The chain runs to 269 residues: WW domain-binding protein 1 (269 aa).

2 short sequence motifs (PPxY motif) span residues 124–127 and 137–141; these read PPAY and PPPPY. Disordered stretches follow at residues 169-203 and 249-269; these read EGTNVEGVSSHQSAPPHQEGEPGAGVTPASTPPSC and PPESVPQIFPMGLSSSEGDIP. The span at 174-183 shows a compositional bias: polar residues; that stretch reads EGVSSHQSAP.

As to quaternary structure, interacts with NEDD4. Binds to the WW domain of YAP1, WWP1 and WWP2. Interacts with WWOX. Expressed in most tissues but at significantly lower levels in placenta, lung, liver, and kidney.

In Homo sapiens (Human), this protein is WW domain-binding protein 1 (WBP1).